The chain runs to 28 residues: Arylalkyl acylamidase (28 aa).

As to quaternary structure, homotetramer.

The catalysed reaction is an N-acetylarylalkylamine + H2O = an aralkylamine + acetate. With respect to regulation, activated by divalent metal ions. Inhibited by certain thiol reagents. Shows a strict specificity for N-acetyl arylalkylamines but not acetanilide derivatives. In Pseudomonas putida (Arthrobacter siderocapsulatus), this protein is Arylalkyl acylamidase.